The following is a 395-amino-acid chain: MNVKTTYRRVFLIVMDSVGIGEAPDAEKYNDKGADTLGHIAEYRGGLYMPNMAKLGLSHIREIKGVPKVERPLAYYTKMKEASAGKDTMTGHWELMGLRIDKPFRVFPNGFPDELIAELERRTGRNVIGNKPASGTAIIEELGEEHMKTGAIIVYTSADSVLQIAAHEQVVPLDELYRICEIARELTRDEPYMVGRVIARPFIGKPGHFERTANRHDYALKPFGKTVMNELKDAGYEVIAIGKIADIYDNEGVTQSLRTTSNMDGMDKLVDTLGMDFTGLSFVNLVDFDAKYGHRRDPKGYGDALEEFDARLADVLPRLKEDDLLIITADHGNDPVHHGTDHTREYVPLLVYSPRFRGGKPLPVRETFADVGATIADNFQVNRPPYGTSFLADLA.

Mn(2+) is bound by residues Asp-16, Asp-289, His-294, Asp-330, His-331, and His-342.

It belongs to the phosphopentomutase family. Requires Mn(2+) as cofactor.

The protein localises to the cytoplasm. It carries out the reaction 2-deoxy-alpha-D-ribose 1-phosphate = 2-deoxy-D-ribose 5-phosphate. The catalysed reaction is alpha-D-ribose 1-phosphate = D-ribose 5-phosphate. The protein operates within carbohydrate degradation; 2-deoxy-D-ribose 1-phosphate degradation; D-glyceraldehyde 3-phosphate and acetaldehyde from 2-deoxy-alpha-D-ribose 1-phosphate: step 1/2. In terms of biological role, isomerase that catalyzes the conversion of deoxy-ribose 1-phosphate (dRib-1-P) and ribose 1-phosphate (Rib-1-P) to deoxy-ribose 5-phosphate (dRib-5-P) and ribose 5-phosphate (Rib-5-P), respectively. The protein is Phosphopentomutase of Geobacillus kaustophilus (strain HTA426).